A 519-amino-acid chain; its full sequence is Zinc finger and BTB domain-containing protein 18.3 (519 aa).

The BTB domain maps to 24–91 (CDCTVLVGDA…MYEGKLQFKD (68 aa)). The segment at 189–227 (ASIPQTGGEVDTHTTAAGKTADSPCSSTGSLSHRSATSM) is disordered. Over residues 201-227 (HTTAAGKTADSPCSSTGSLSHRSATSM) the composition is skewed to polar residues. C2H2-type zinc fingers lie at residues 367-389 (FMCP…LSTH), 407-429 (PTCS…ERTH), 435-457 (FTCT…AVVH), and 463-486 (HACK…RKFH).

Belongs to the krueppel C2H2-type zinc-finger protein family. ZBTB18 subfamily.

Its subcellular location is the nucleus. Functionally, transcriptional repressor that plays a role in various developmental processes. Specifically binds the consensus DNA sequence 5'-[AC]ACATCTG[GT][AC]-3' which contains the E box core, and acts by recruiting chromatin remodeling multiprotein complexes. The polypeptide is Zinc finger and BTB domain-containing protein 18.3 (zbtb18.3) (Xenopus laevis (African clawed frog)).